A 140-amino-acid polypeptide reads, in one-letter code: Ribonuclease P protein component (140 aa).

The protein belongs to the RnpA family. Consists of a catalytic RNA component (M1 or rnpB) and a protein subunit.

It carries out the reaction Endonucleolytic cleavage of RNA, removing 5'-extranucleotides from tRNA precursor.. In terms of biological role, RNaseP catalyzes the removal of the 5'-leader sequence from pre-tRNA to produce the mature 5'-terminus. It can also cleave other RNA substrates such as 4.5S RNA. The protein component plays an auxiliary but essential role in vivo by binding to the 5'-leader sequence and broadening the substrate specificity of the ribozyme. The polypeptide is Ribonuclease P protein component (Ralstonia pickettii (strain 12J)).